The sequence spans 73 residues: UPF0352 protein HSM_0097 (73 aa).

Belongs to the UPF0352 family.

In Histophilus somni (strain 2336) (Haemophilus somnus), this protein is UPF0352 protein HSM_0097.